We begin with the raw amino-acid sequence, 467 residues long: Serum response factor homolog B (467 aa).

Over residues 1–15 (MELNMNQYDNIESND) the composition is skewed to polar residues. Disordered stretches follow at residues 1-38 (MELN…KSGR), 115-245 (NTPD…NNLT), and 301-467 (IQNI…PSDL). Residues 36–96 (SGRRKINIEF…GHVYTFATPK (61 aa)) form the MADS-box domain. Over residues 128 to 205 (NNNNGNNSNN…NNNNNNNNNN (78 aa)) the composition is skewed to low complexity. Over residues 206–220 (CKEEQNMNIPNERKS) the composition is skewed to basic and acidic residues. 4 stretches are compositionally biased toward low complexity: residues 222–245 (NNIN…NNLT), 301–334 (IQNI…SNNI), 347–392 (GSNS…NSNN), and 401–440 (PSPI…YGGY). The segment covering 442 to 467 (QPFSRNYPLQSNIATNSTVSKAPSDL) has biased composition (polar residues).

Its subcellular location is the nucleus. This is Serum response factor homolog B (srfB) from Dictyostelium discoideum (Social amoeba).